The primary structure comprises 1679 residues: [F-actin]-monooxygenase mical2b (1679 aa).

Residues 2–494 (GETEEERTSQ…RHLFISGEQD (493 aa)) form a monooxygenase domain region. FAD is bound by residues cysteine 97, 97–125 (CGFR…SRNN), glutamate 116, arginine 118, arginine 123, asparagine 125, and aspartate 398. One can recognise a Calponin-homology (CH) domain in the interval 516-619 (EVRPGRLLLW…MVLYLSKFYE (104 aa)). Positions 658–679 (RKRIPKLDKKLEESDVNRKRKK) match the Nuclear localization signal motif. Disordered stretches follow at residues 661-772 (IPKL…KAKW), 818-838 (SAYK…TPTL), 874-907 (SSLF…ESST), 1073-1163 (STRH…RSTA), 1194-1247 (KPED…DEIP), 1259-1283 (EYPK…ISFS), 1302-1342 (DLTN…PAPP), and 1473-1509 (RNKA…KKKE). Basic and acidic residues-rich tracts occupy residues 662 to 674 (PKLD…SDVN) and 697 to 707 (GEREEQKENKV). The span at 874 to 888 (SSLFTGNPAQPQTDE) shows a compositional bias: polar residues. Residues 1011–1073 (DTCVFCQKRV…KMHFSQRKTS (63 aa)) enclose the LIM zinc-binding domain. Residues 1086 to 1099 (IRSSSITISNHTST) are compositionally biased toward low complexity. Positions 1112 to 1123 (DSSTQQDLQTLP) are enriched in polar residues. Residues 1133-1143 (EVKDSSKKADP) show a composition bias toward basic and acidic residues. Over residues 1144–1154 (ADSAPACPDSP) the composition is skewed to low complexity. A compositionally biased stretch (acidic residues) spans 1202 to 1211 (LAEEDGNSDF). Polar residues predominate over residues 1220-1242 (SKKPSNPSTDSNCLPTKDNSSTP). The segment covering 1259–1270 (EYPKPSSSSPEP) has biased composition (low complexity). Residues 1302–1325 (DLTNPGKSGAEEQQQQHVKPSISL) show a composition bias toward polar residues. Positions 1333–1342 (THPQPEPAPP) are enriched in pro residues. Positions 1475–1489 (KASAQQQQQQKSNSS) are enriched in low complexity. A bMERB domain is found at 1517–1667 (KSDELKRLHR…EKAEDRDLES (151 aa)).

Belongs to the Mical family. FAD serves as cofactor.

Its subcellular location is the nucleus. It is found in the cytoplasm. The enzyme catalyses L-methionyl-[F-actin] + NADPH + O2 + H(+) = L-methionyl-(R)-S-oxide-[F-actin] + NADP(+) + H2O. Nuclear monooxygenase that promotes depolymerization of F-actin by mediating oxidation of specific methionine residues on actin and regulates the srf signaling. Acts by modifying nuclear actin subunits through the addition of oxygen to form methionine-sulfoxide, leading to promote actin filament severing and prevent repolymerization. Acts as a key regulator of the srf signaling pathway elicited by nerve growth factor and serum: mediates oxidation and subsequent depolymerization of nuclear actin, leading to increase mkl1/mrtf-a presence in the nucleus and promote srf:mkl1/mrtf-a-dependent gene transcription. The sequence is that of [F-actin]-monooxygenase mical2b from Danio rerio (Zebrafish).